Here is a 639-residue protein sequence, read N- to C-terminus: Kininogen-1 (639 aa).

A signal peptide spans 1–18 (MKLITILLLCSRLLPSLA). The region spanning 28-132 (CNDESLFQAV…TQICNITPGK (105 aa)) is the Cystatin kininogen-type 1 domain. 9 disulfide bridges follow: Cys-28/Cys-609, Cys-83/Cys-94, Cys-107/Cys-126, Cys-142/Cys-145, Cys-206/Cys-218, Cys-229/Cys-248, Cys-264/Cys-267, Cys-328/Cys-340, and Cys-351/Cys-370. A glycan (N-linked (GlcNAc...) asparagine) is linked at Asn-82. The region spanning 151-254 (VDSPELGPVL…SDSCEFYPGD (104 aa)) is the Cystatin kininogen-type 2 domain. Residues Asn-169 and Asn-205 are each glycosylated (N-linked (GlcNAc...) asparagine). One can recognise a Cystatin kininogen-type 3 domain in the interval 273 to 376 (VDSPELKEAL…TVKCKVLDMT (104 aa)). Asn-294 is a glycosylation site (N-linked (GlcNAc...) asparagine). The residue at position 332 (Ser-332) is a Phosphoserine. Disordered stretches follow at residues 438 to 462 (NHQG…GHGH) and 476 to 547 (GYDH…LNPP). The span at 482–502 (PVGHGHGQRHGHGHGHGHGRD) shows a compositional bias: basic residues. The segment covering 503 to 519 (KHTNKDKNNVKHTDQRR) has biased composition (basic and acidic residues). Over residues 522 to 537 (LTSSSEDNTTSTQIQG) the composition is skewed to polar residues. Asn-529 carries N-linked (GlcNAc...) asparagine glycosylation.

In terms of processing, bradykinin is released from kininogen by plasma kallikrein. Post-translationally, phosphorylated by FAM20C in the extracellular medium. Bradykinin is inactivated by ACE, which removes the dipeptide Arg-Phe from its C-terminus. As to expression, plasma.

Its subcellular location is the secreted. It is found in the extracellular space. Its function is as follows. Kininogens are inhibitors of thiol proteases. HMW-kininogen plays an important role in blood coagulation by helping to position optimally prekallikrein and factor XI next to factor XII; HMW-kininogen inhibits the thrombin- and plasmin-induced aggregation of thrombocytes. LMW-kininogen inhibits the aggregation of thrombocytes. LMW-kininogen is in contrast to HMW-kininogen not involved in blood clotting. The active peptide bradykinin is a potent vasodilatator that is released from HMW-kininogen shows a variety of physiological effects: (A) influence in smooth muscle contraction, (B) induction of hypotension, (C) natriuresis and diuresis, (D) decrease in blood glucose level, (E) it is a mediator of inflammation and causes (E1) increase in vascular permeability, (E2) stimulation of nociceptors (4E3) release of other mediators of inflammation (e.g. prostaglandins), (F) it has a cardioprotective effect (directly via bradykinin action, indirectly via endothelium-derived relaxing factor action). The chain is Kininogen-1 (Kng1) from Rattus norvegicus (Rat).